The chain runs to 299 residues: Recombination-associated protein RdgC (299 aa).

It belongs to the RdgC family.

Its subcellular location is the cytoplasm. The protein localises to the nucleoid. In terms of biological role, may be involved in recombination. This is Recombination-associated protein RdgC from Neisseria meningitidis serogroup A / serotype 4A (strain DSM 15465 / Z2491).